Consider the following 395-residue polypeptide: Fe(3+) ions import ATP-binding protein FbpC 2 (395 aa).

The interval 1–21 (MHIAQELADETCNSPRGAGHA) is disordered. Residues 23–264 (LRYPSDRRTA…PKTLFVADFI (242 aa)) enclose the ABC transporter domain. 66–73 (GPSGCGKT) is an ATP binding site.

The protein belongs to the ABC transporter superfamily. Fe(3+) ion importer (TC 3.A.1.10) family. As to quaternary structure, the complex is composed of two ATP-binding proteins (FbpC), two transmembrane proteins (FbpB) and a solute-binding protein (FbpA).

The protein resides in the cell inner membrane. It carries out the reaction Fe(3+)(out) + ATP + H2O = Fe(3+)(in) + ADP + phosphate + H(+). Its function is as follows. Part of the ABC transporter complex FbpABC involved in Fe(3+) ions import. Responsible for energy coupling to the transport system. The chain is Fe(3+) ions import ATP-binding protein FbpC 2 from Rhizobium meliloti (strain 1021) (Ensifer meliloti).